The primary structure comprises 232 residues: 7-cyano-7-deazaguanine synthase (232 aa).

ATP is bound at residue 7–17; that stretch reads CSGGLDSVSLA. Residues C185, C193, C196, and C199 each contribute to the Zn(2+) site.

It belongs to the QueC family. Zn(2+) is required as a cofactor.

The enzyme catalyses 7-carboxy-7-deazaguanine + NH4(+) + ATP = 7-cyano-7-deazaguanine + ADP + phosphate + H2O + H(+). Its pathway is purine metabolism; 7-cyano-7-deazaguanine biosynthesis. In terms of biological role, catalyzes the ATP-dependent conversion of 7-carboxy-7-deazaguanine (CDG) to 7-cyano-7-deazaguanine (preQ(0)). This is 7-cyano-7-deazaguanine synthase from Brucella abortus (strain S19).